The following is a 147-amino-acid chain: Heavy metal-dependent transcription regulator 2 (147 aa).

Residues Met1–Leu69 enclose the HTH merR-type domain. Residues Ile3 to Gln22 constitute a DNA-binding region (H-T-H motif).

It is found in the cytoplasm. Functionally, transcriptional regulator involved in acid tolerance. Binds copper. The protein is Heavy metal-dependent transcription regulator 2 (hmrR2) of Rhizobium meliloti (strain 1021) (Ensifer meliloti).